The following is a 296-amino-acid chain: 4-hydroxy-tetrahydrodipicolinate synthase (296 aa).

Residue Thr-49 participates in pyruvate binding. Catalysis depends on Tyr-137, which acts as the Proton donor/acceptor. The active-site Schiff-base intermediate with substrate is the Lys-166. Ile-208 serves as a coordination point for pyruvate.

The protein belongs to the DapA family. As to quaternary structure, homotetramer; dimer of dimers.

It is found in the cytoplasm. The catalysed reaction is L-aspartate 4-semialdehyde + pyruvate = (2S,4S)-4-hydroxy-2,3,4,5-tetrahydrodipicolinate + H2O + H(+). The protein operates within amino-acid biosynthesis; L-lysine biosynthesis via DAP pathway; (S)-tetrahydrodipicolinate from L-aspartate: step 3/4. In terms of biological role, catalyzes the condensation of (S)-aspartate-beta-semialdehyde [(S)-ASA] and pyruvate to 4-hydroxy-tetrahydrodipicolinate (HTPA). This Pelodictyon phaeoclathratiforme (strain DSM 5477 / BU-1) protein is 4-hydroxy-tetrahydrodipicolinate synthase.